The sequence spans 38 residues: Natriuretic peptide DNP (38 aa).

C7 and C23 form a disulfide bridge. The disordered stretch occupies residues 19-38 (SNLGCPSLRDPRPNAPSTSA).

It belongs to the natriuretic peptide family. As to expression, expressed by the venom gland.

The protein localises to the secreted. Exhibits vasodilator, natriuretic and diuretic properties in animal models and human tissues. Acts by stimulating cGMP via the natriuretic peptide receptor 1 (NPR1). Is a poor agonist of the atrial natriuretic peptide receptor 2 (NPR2). Is not degraded by neutral endopeptidase (NEP/MME). Binds to atrial natriuretic peptide clearance receptor (NPR-C/NPR3), which may be responsible of the removal of DNP from the circulation. Increases calcium uptake and induces histamine release from rat peritoneal mast cells. Increases calcium-activated potassium (KCa) current in gastric antral circular smooth muscle cells by increasing cGMP production and activating inositol trisphosphate receptors (IP3Rs). In vivo, reduces both systolic and diastolic blood pressure with no effect on heart rate, when intravenously injected in conscious rabbits. This is Natriuretic peptide DNP from Dendroaspis angusticeps (Eastern green mamba).